The chain runs to 398 residues: Probable aminomethyltransferase (398 aa).

It belongs to the GcvT family. As to quaternary structure, the glycine cleavage system is composed of four proteins: P, T, L and H.

It catalyses the reaction N(6)-[(R)-S(8)-aminomethyldihydrolipoyl]-L-lysyl-[protein] + (6S)-5,6,7,8-tetrahydrofolate = N(6)-[(R)-dihydrolipoyl]-L-lysyl-[protein] + (6R)-5,10-methylene-5,6,7,8-tetrahydrofolate + NH4(+). In terms of biological role, the glycine cleavage system catalyzes the degradation of glycine. This Pyrococcus abyssi (strain GE5 / Orsay) protein is Probable aminomethyltransferase.